The primary structure comprises 468 residues: Nucleoprotein (468 aa).

The disordered stretch occupies residues 1–64 (MSGRNRSRSG…KPKAAPPQNV (64 aa)). Over residues 18–33 (FKQESDGSDSESERRN) the composition is skewed to basic and acidic residues. The segment at 48-193 (GSAPKPEKPK…AEGRGSRGNS (146 aa)) is RNA-binding. Positions 62–186 (QNVSWFAPLV…GIPKGFYAEG (125 aa)) constitute a CoV N NTD domain. Arg-106, Arg-120, and Arg-162 together coordinate RNA. At Ser-165 the chain carries Phosphoserine; by host. Disordered stretches follow at residues 181 to 228 (GFYA…PSTE), 373 to 399 (KDFP…IFED), and 419 to 468 (QTDD…AERS). Positions 190 to 223 (RGNSRSSSRNSSRASSRGNSRASSRGASPGRPAA) are enriched in low complexity. The CoV N CTD domain occupies 259–376 (TKNEAAANAK…ENLNAYKDFP (118 aa)). The tract at residues 270 to 373 (LRHKRTAHKG…ILAENLNAYK (104 aa)) is dimerization. Residues 379 to 390 (EPKKDKKKKEET) show a composition bias toward basic and acidic residues. The segment covering 419-436 (QTDDEWLGGDETVYEDED) has biased composition (acidic residues). A Phosphothreonine; by host modification is found at Thr-451.

It belongs to the betacoronavirus nucleocapsid protein family. Homooligomer. Both monomeric and oligomeric forms interact with RNA. Interacts with protein M. Interacts with NSP3; this interaction serves to tether the genome to the newly translated replicase-transcriptase complex at a very early stage of infection. In terms of processing, ADP-ribosylated. The ADP-ribosylation is retained in the virion during infection. Phosphorylated on serine and threonine residues.

It localises to the virion. The protein localises to the host endoplasmic reticulum-Golgi intermediate compartment. The protein resides in the host Golgi apparatus. Functionally, packages the positive strand viral genome RNA into a helical ribonucleocapsid (RNP) and plays a fundamental role during virion assembly through its interactions with the viral genome and membrane protein M. Plays an important role in enhancing the efficiency of subgenomic viral RNA transcription as well as viral replication. This is Nucleoprotein from Rousettus leschenaultii (Leschenault's rousette).